The primary structure comprises 89 residues: Large ribosomal subunit protein bL27 (89 aa).

The interval 1-24 (MAHKKAGGSSRNGRDSAGRRLGVK) is disordered.

This sequence belongs to the bacterial ribosomal protein bL27 family.

The sequence is that of Large ribosomal subunit protein bL27 from Maricaulis maris (strain MCS10) (Caulobacter maris).